The following is a 259-amino-acid chain: UPF0739 protein C1orf74 homolog (259 aa).

The protein belongs to the UPF0739 family.

The polypeptide is UPF0739 protein C1orf74 homolog (Danio rerio (Zebrafish)).